A 113-amino-acid polypeptide reads, in one-letter code: TYRO protein tyrosine kinase-binding protein (113 aa).

The N-terminal stretch at 1–21 (MGGLEPCSRLLLLPLLLAVSG) is a signal peptide. The Extracellular segment spans residues 22-40 (LRPVQAQAQSDCSCSTVSP). A helical membrane pass occupies residues 41 to 61 (GVLAGIVMGDLVLTVLIALAV). Ca(2+) is bound at residue Asp-50. At 62–113 (YFLGRLVPRGRGAAEAATRKQRITETESPYQELQGQRSDVYSDLNTQRPYYK) the chain is on the cytoplasmic side. Residues 75–113 (AEAATRKQRITETESPYQELQGQRSDVYSDLNTQRPYYK) form a disordered region. Positions 80–108 (RKQRITETESPYQELQGQRSDVYSDLNTQ) constitute an ITAM domain. The span at 87 to 113 (TESPYQELQGQRSDVYSDLNTQRPYYK) shows a compositional bias: polar residues. Phosphotyrosine is present on residues Tyr-91 and Tyr-102.

The protein belongs to the TYROBP family. As to quaternary structure, homodimer; disulfide-linked. Homotrimer; disulfide-linked. Homotetramer; disulfide-linked. Homotrimers and homotetramers form when low levels of partner receptors are available and are competitive with assembly with interacting receptors. They may represent alternative oligomerization states or may be intermediates in the receptor assembly process. Binding of a metal cation aids in homooligomerization through coordination of the metal ion by the subunits of the oligomer. Interacts with TREM1. Interacts with TREM2. Interacts with SIRPB1. Interacts with CLECSF5. Interacts with SIGLEC14. Interacts with CD300LB and CD300E. Interacts with CD300C2. Interacts (via ITAM domain) with SYK (via SH2 domains); activates SYK mediating neutrophil and macrophage integrin-mediated activation. Interacts with KLRC2, KIR2DS3 and KIR2DS5. Interacts with CD300H. Interacts with KIR2DS1. Interacts with KLRD1. Interacts with SIGLEC1. In terms of processing, following ligand binding by associated receptors, tyrosine phosphorylated in the ITAM domain which leads to activation of additional tyrosine kinases and subsequent cell activation. As to expression, expressed at low levels in the early development of the hematopoietic system and in the promonocytic stage and at high levels in mature monocytes. Expressed in hematological cells and tissues such as peripheral blood leukocytes and spleen. Also found in bone marrow, lymph nodes, placenta, lung and liver. Expressed at lower levels in different parts of the brain especially in the basal ganglia and corpus callosum.

The protein localises to the cell membrane. Functionally, adapter protein which non-covalently associates with activating receptors found on the surface of a variety of immune cells to mediate signaling and cell activation following ligand binding by the receptors. TYROBP is tyrosine-phosphorylated in the ITAM domain following ligand binding by the associated receptors which leads to activation of additional tyrosine kinases and subsequent cell activation. Also has an inhibitory role in some cells. Non-covalently associates with activating receptors of the CD300 family to mediate cell activation. Also mediates cell activation through association with activating receptors of the CD200R family. Required for neutrophil activation mediated by integrin. Required for the activation of myeloid cells mediated by the CLEC5A/MDL1 receptor. Associates with natural killer (NK) cell receptors such as KIR2DS2 and the KLRD1/KLRC2 heterodimer to mediate NK cell activation. Also enhances trafficking and cell surface expression of NK cell receptors KIR2DS1, KIR2DS2 and KIR2DS4 and ensures their stability at the cell surface. Associates with SIRPB1 to mediate activation of myeloid cells such as monocytes and dendritic cells. Associates with TREM1 to mediate activation of neutrophils and monocytes. Associates with TREM2 on monocyte-derived dendritic cells to mediate up-regulation of chemokine receptor CCR7 and dendritic cell maturation and survival. Association with TREM2 mediates cytokine-induced formation of multinucleated giant cells which are formed by the fusion of macrophages. Stabilizes the TREM2 C-terminal fragment (TREM2-CTF) produced by TREM2 ectodomain shedding which suppresses the release of pro-inflammatory cytokines. In microglia, required with TREM2 for phagocytosis of apoptotic neurons. Required with ITGAM/CD11B in microglia to control production of microglial superoxide ions which promote the neuronal apoptosis that occurs during brain development. Promotes pro-inflammatory responses in microglia following nerve injury which accelerates degeneration of injured neurons. Positively regulates the expression of the IRAK3/IRAK-M kinase and IL10 production by liver dendritic cells and inhibits their T cell allostimulatory ability. Negatively regulates B cell proliferation. Required for CSF1-mediated osteoclast cytoskeletal organization. Positively regulates multinucleation during osteoclast development. The chain is TYRO protein tyrosine kinase-binding protein from Homo sapiens (Human).